The primary structure comprises 590 residues: MGFRLITQLKGMSVFLVLFPTLLLVMLTGAQRACPKNCRCDGKIVYCESHAFADIPENISGGSQGLSLRFNSIQKLKSNQFAGLNQLIWLYLDHNYISSVDEDAFQGIRRLKELILSSNKITYLHNKTFHPVPNLRNLDLSYNKLQTLQSEQFKGLRKLIILHLRSNSLKTVPIRVFQDCRNLDFLDLGYNRLRSLSRNAFAGLLKLKELHLEHNQFSKINFAHFPRLFNLRSIYLQWNRIRSVSQGLTWTWSSLHTLDLSGNDIQAIEPGTFKCLPNLQKLNLDSNKLTNVSQETVNAWISLISITLSGNMWECSRSICPLFYWLKNFKGNKESTMICAGPKHIQGEKVSDAVETYNICSDVQVVNTERSHLAPQTPQKPPFIPKPTIFKPDAVPATLEAVSPSPGFQIPGTDHEYEHVSFHKIIAGSVALFLSVAMILLVIYVSWKRYPASMKQLQQHSLMKRRRKKARESERQMNSPLQEYYVDYKPTNSETMDISVNGSGPCTYTISGSRECEIPHHVKPLPYYSYDQPVIGYCQAHQPLHINKAYEAVSIEQDDSPSLELGRDHSFIATIARSAAPAIYLERITN.

The first 30 residues, 1–30 (MGFRLITQLKGMSVFLVLFPTLLLVMLTGA), serve as a signal peptide directing secretion. One can recognise an LRRNT domain in the interval 31–61 (QRACPKNCRCDGKIVYCESHAFADIPENISG). Topologically, residues 31–424 (QRACPKNCRC…HEYEHVSFHK (394 aa)) are extracellular. Asparagine 58 is a glycosylation site (N-linked (GlcNAc...) asparagine). 10 LRR repeats span residues 62–83 (GSQG…QFAG), 86–107 (QLIW…AFQG), 110–131 (RLKE…TFHP), 134–155 (NLRN…QFKG), 158–179 (KLII…VFQD), 182–203 (NLDF…AFAG), 206–226 (KLKE…AHFP), 230–251 (NLRS…LTWT), 254–275 (SLHT…TFKC), and 278–299 (NLQK…TVNA). Asparagine 126 carries an N-linked (GlcNAc...) asparagine glycan. Residue asparagine 291 is glycosylated (N-linked (GlcNAc...) asparagine). The region spanning 311-362 (NMWECSRSICPLFYWLKNFKGNKESTMICAGPKHIQGEKVSDAVETYNICSD) is the LRRCT domain. The chain crosses the membrane as a helical span at residues 425 to 445 (IIAGSVALFLSVAMILLVIYV). The Cytoplasmic portion of the chain corresponds to 446-590 (SWKRYPASMK…PAIYLERITN (145 aa)).

Belongs to the LRRTM family. Peripherally associated with AMPAR complex. AMPAR complex consists of an inner core made of 4 pore-forming GluA/GRIA proteins (GRIA1, GRIA2, GRIA3 and GRIA4) and 4 major auxiliary subunits arranged in a twofold symmetry. One of the two pairs of distinct binding sites is occupied either by CNIH2, CNIH3 or CACNG2, CACNG3. The other harbors CACNG2, CACNG3, CACNG4, CACNG8 or GSG1L. This inner core of AMPAR complex is complemented by outer core constituents binding directly to the GluA/GRIA proteins at sites distinct from the interaction sites of the inner core constituents. Outer core constituents include at least PRRT1, PRRT2, CKAMP44/SHISA9, FRRS1L and NRN1. The proteins of the inner and outer core serve as a platform for other, more peripherally associated AMPAR constituents, including LRRTM4. Alone or in combination, these auxiliary subunits control the gating and pharmacology of the AMPAR complex and profoundly impact their biogenesis and protein processing. As to expression, predominantly in the brain (at protein level). Also expressed in the cerebellum and other tissues.

Its subcellular location is the cell membrane. The protein resides in the postsynaptic cell membrane. In terms of biological role, may play a role in the development and maintenance of the vertebrate nervous system. Exhibits strong synaptogenic activity, restricted to excitatory presynaptic differentiation. The polypeptide is Leucine-rich repeat transmembrane neuronal protein 4 (Lrrtm4) (Mus musculus (Mouse)).